The sequence spans 346 residues: DNA-directed RNA polymerases I and III subunit RPAC1 (346 aa).

Residue Ala-2 is modified to N-acetylalanine.

This sequence belongs to the archaeal Rpo3/eukaryotic RPB3 RNA polymerase subunit family. In terms of assembly, component of the RNA polymerase I and RNA polymerase III complexes consisting of at least 13 and 17 subunits, respectively. Pol I complex consists of a ten-subunit catalytic core composed of POLR1A/RPA1, POLR1B/RPA2, POLR1C/RPAC1, POLR1D/RPAC2, POLR1H/RPA12, POLR2E/RPABC1, POLR2F/RPABC2, POLR2H/RPABC3, POLR2K/RPABC4 and POLR2L/RPABC5; a mobile stalk subunit POLR1F/RPA43 protruding from the core and additional subunits homologous to general transcription factors POLR1E/RPA49 and POLR1G/RPA34. Part of Pol I pre-initiation complex (PIC), in which Pol I core assembles with RRN3 and promoter-bound UTBF and SL1/TIF-IB complex. Pol III complex consists of a ten-subunit catalytic core composed of POLR3A/RPC1, POLR3B/RPC2, POLR1C/RPAC1, POLR1D/RPAC2, POLR3K/RPC10, POLR2E/RPABC1, POLR2F/RPABC2, POLR2H/RPABC3, POLR2K/RPABC4 and POLR2L/RPABC5; a mobile stalk composed of two subunits POLR3H/RPC8 and CRCP/RPC9, protruding from the core and functioning primarily in transcription initiation; and additional subunits homologous to general transcription factors of the RNA polymerase II machinery, POLR3C/RPC3-POLR3F/RPC6-POLR3G/RPC7 heterotrimer required for transcription initiation and POLR3D/RPC4-POLR3E/RPC5 heterodimer involved in both transcription initiation and termination.

It is found in the nucleus. The protein resides in the cytoplasm. Its subcellular location is the cytosol. Functionally, DNA-dependent RNA polymerase catalyzes the transcription of DNA into RNA using the four ribonucleoside triphosphates as substrates. Common component of RNA polymerases I and III which synthesize ribosomal RNA precursors and short non-coding RNAs including 5S rRNA, snRNAs, tRNAs and miRNAs, respectively. POLR1C/RPAC1 is part of the polymerase core and may function as a clamp element that moves to open and close the cleft. The protein is DNA-directed RNA polymerases I and III subunit RPAC1 of Mus musculus (Mouse).